The following is a 183-amino-acid chain: Ribosome rescue factor SmrB (183 aa).

The 76-residue stretch at 98-173 (LDLHGLTQLQ…GDAALLVLIE (76 aa)) folds into the Smr domain.

This sequence belongs to the SmrB family. In terms of assembly, associates with collided ribosomes, but not with correctly translating polysomes.

In terms of biological role, acts as a ribosome collision sensor. Detects stalled/collided disomes (pairs of ribosomes where the leading ribosome is stalled and a second ribosome has collided with it) and endonucleolytically cleaves mRNA at the 5' boundary of the stalled ribosome. Stalled/collided disomes form a new interface (primarily via the 30S subunits) that binds SmrB. Cleaved mRNA becomes available for tmRNA ligation, leading to ribosomal subunit dissociation and rescue of stalled ribosomes. This chain is Ribosome rescue factor SmrB, found in Shigella sonnei (strain Ss046).